We begin with the raw amino-acid sequence, 626 residues long: tRNA uridine 5-carboxymethylaminomethyl modification enzyme MnmG (626 aa).

Residue 13–18 coordinates FAD; the sequence is GGGHAG. Position 273–287 (273–287) interacts with NAD(+); it reads GPRYCPSIEDKIHRF.

It belongs to the MnmG family. Homodimer. Heterotetramer of two MnmE and two MnmG subunits. The cofactor is FAD.

Its subcellular location is the cytoplasm. Its function is as follows. NAD-binding protein involved in the addition of a carboxymethylaminomethyl (cmnm) group at the wobble position (U34) of certain tRNAs, forming tRNA-cmnm(5)s(2)U34. The protein is tRNA uridine 5-carboxymethylaminomethyl modification enzyme MnmG of Acinetobacter baumannii (strain AB307-0294).